A 344-amino-acid chain; its full sequence is Methionine import ATP-binding protein MetN (344 aa).

In terms of domain architecture, ABC transporter spans 2–241; it reads IELQGLSQRF…PQHEVTRAMI (240 aa). 38–45 provides a ligand contact to ATP; sequence GRSGAGKS.

This sequence belongs to the ABC transporter superfamily. Methionine importer (TC 3.A.1.24) family. The complex is composed of two ATP-binding proteins (MetN), two transmembrane proteins (MetI) and a solute-binding protein (MetQ).

The protein resides in the cell inner membrane. The catalysed reaction is L-methionine(out) + ATP + H2O = L-methionine(in) + ADP + phosphate + H(+). It catalyses the reaction D-methionine(out) + ATP + H2O = D-methionine(in) + ADP + phosphate + H(+). Its function is as follows. Part of the ABC transporter complex MetNIQ involved in methionine import. Responsible for energy coupling to the transport system. The chain is Methionine import ATP-binding protein MetN from Cupriavidus pinatubonensis (strain JMP 134 / LMG 1197) (Cupriavidus necator (strain JMP 134)).